The sequence spans 513 residues: NAD(P)H-quinone oxidoreductase subunit 2 (513 aa).

14 helical membrane passes run 12 to 32, 41 to 61, 77 to 97, 104 to 124, 130 to 150, 165 to 185, 199 to 219, 238 to 258, 272 to 292, 300 to 320, 328 to 348, 372 to 392, 394 to 414, and 456 to 476; these read TLWP…VDLI, LPYL…PMWI, LSVV…LMSV, SLAT…AMLL, MAMI…LSGY, LLIG…LYGF, IVNL…GICF, PTPV…ALAI, WQTL…VVAI, MLAY…AIGT, ILYI…VVLF, LVLS…GFFG, LYLF…FGLV, and AGML…PPLI. Over residues 494 to 505 the composition is skewed to polar residues; it reads TATPVSRVSTGA. The interval 494 to 513 is disordered; the sequence is TATPVSRVSTGAQAPADHGR.

Belongs to the complex I subunit 2 family. NDH-1 can be composed of about 15 different subunits; different subcomplexes with different compositions have been identified which probably have different functions.

Its subcellular location is the cell inner membrane. The catalysed reaction is a plastoquinone + NADH + (n+1) H(+)(in) = a plastoquinol + NAD(+) + n H(+)(out). The enzyme catalyses a plastoquinone + NADPH + (n+1) H(+)(in) = a plastoquinol + NADP(+) + n H(+)(out). In terms of biological role, NDH-1 shuttles electrons from an unknown electron donor, via FMN and iron-sulfur (Fe-S) centers, to quinones in the respiratory and/or the photosynthetic chain. The immediate electron acceptor for the enzyme in this species is believed to be plastoquinone. Couples the redox reaction to proton translocation, and thus conserves the redox energy in a proton gradient. Cyanobacterial NDH-1 also plays a role in inorganic carbon-concentration. This is NAD(P)H-quinone oxidoreductase subunit 2 from Gloeobacter violaceus (strain ATCC 29082 / PCC 7421).